The sequence spans 298 residues: GTPase Era (298 aa).

The region spanning 3–170 (KSGFVAILGR…VQLLKDNLEE (168 aa)) is the Era-type G domain. Residues 11 to 18 (GRPNVGKS) are G1. 11-18 (GRPNVGKS) serves as a coordination point for GTP. A G2 region spans residues 37–41 (QTTRN). The segment at 58 to 61 (DTPG) is G3. Residues 58 to 62 (DTPGI) and 120 to 123 (NKID) each bind GTP. A G4 region spans residues 120–123 (NKID). The G5 stretch occupies residues 149–151 (ISA). A KH type-2 domain is found at 201-279 (TQQEVPHSVA…YLETWVKVKK (79 aa)).

This sequence belongs to the TRAFAC class TrmE-Era-EngA-EngB-Septin-like GTPase superfamily. Era GTPase family. In terms of assembly, monomer.

It localises to the cytoplasm. The protein resides in the cell membrane. An essential GTPase that binds both GDP and GTP, with rapid nucleotide exchange. Plays a role in 16S rRNA processing and 30S ribosomal subunit biogenesis and possibly also in cell cycle regulation and energy metabolism. This chain is GTPase Era, found in Streptococcus equi subsp. zooepidemicus (strain MGCS10565).